Here is a 59-residue protein sequence, read N- to C-terminus: UPF0181 protein CKO_01169 (59 aa).

Belongs to the UPF0181 family.

The sequence is that of UPF0181 protein CKO_01169 from Citrobacter koseri (strain ATCC BAA-895 / CDC 4225-83 / SGSC4696).